A 156-amino-acid chain; its full sequence is Transcriptional regulator MraZ (156 aa).

SpoVT-AbrB domains follow at residues 7–54 (NIEV…PESV) and 84–127 (VEVV…AKER).

The protein belongs to the MraZ family. As to quaternary structure, forms oligomers.

Its subcellular location is the cytoplasm. It is found in the nucleoid. The sequence is that of Transcriptional regulator MraZ from Bacteroides thetaiotaomicron (strain ATCC 29148 / DSM 2079 / JCM 5827 / CCUG 10774 / NCTC 10582 / VPI-5482 / E50).